The primary structure comprises 179 residues: Putative ADP-ribosylation factor-like protein 5C (179 aa).

Gly2 is lipidated: N-myristoyl glycine. GTP contacts are provided by residues 23-30, 66-70, and 125-128; these read GLDNEGKT, DIVRP, and NKQD.

It belongs to the small GTPase superfamily. Arf family.

Binds and exchanges GTP and GDP. This chain is Putative ADP-ribosylation factor-like protein 5C (ARL5C), found in Homo sapiens (Human).